The following is a 360-amino-acid chain: UDP-3-O-acylglucosamine N-acyltransferase (360 aa).

H253 functions as the Proton acceptor in the catalytic mechanism.

Belongs to the transferase hexapeptide repeat family. LpxD subfamily. As to quaternary structure, homotrimer.

It catalyses the reaction a UDP-3-O-[(3R)-3-hydroxyacyl]-alpha-D-glucosamine + a (3R)-hydroxyacyl-[ACP] = a UDP-2-N,3-O-bis[(3R)-3-hydroxyacyl]-alpha-D-glucosamine + holo-[ACP] + H(+). Its pathway is bacterial outer membrane biogenesis; LPS lipid A biosynthesis. Catalyzes the N-acylation of UDP-3-O-acylglucosamine using 3-hydroxyacyl-ACP as the acyl donor. Is involved in the biosynthesis of lipid A, a phosphorylated glycolipid that anchors the lipopolysaccharide to the outer membrane of the cell. The polypeptide is UDP-3-O-acylglucosamine N-acyltransferase (Burkholderia multivorans (strain ATCC 17616 / 249)).